The sequence spans 611 residues: Protein halfway (611 aa).

The signal sequence occupies residues 1–22 (MLAYTHGTWLLLLLLLVAGACA). 3 disordered regions span residues 31 to 64 (DPAALGEESTPHAHAHPQARHHHHAHPHAPLKED), 90 to 132 (SLAE…AAPE), and 154 to 185 (GRAETSEGQGSTVAQSEAQNRGGQGNSQCQCR). The segment covering 43 to 59 (AHAHPQARHHHHAHPHA) has biased composition (basic residues). Positions 90–101 (SLAETQSMSDPG) are enriched in polar residues. Residues 102–123 (SVTDTTSTSTSHSTSTTSTTSP) show a composition bias toward low complexity. A compositionally biased stretch (polar residues) spans 159–183 (SEGQGSTVAQSEAQNRGGQGNSQCQ). Asn-221, Asn-246, Asn-264, and Asn-269 each carry an N-linked (GlcNAc...) asparagine glycan. LRR repeat units follow at residues 236–257 (SLQSLAVTDGNITRLVNAFPRL), 259–280 (ALKCLNISNNNISEIHSRAVKD), 283–304 (HLEFFGMSNNNLSLVPHRNQNK), and 313–334 (NMRMLCTPLNEIIYTESINFLN). One can recognise an LRRNT domain in the interval 361-416 (ENRKRCVTNCPVIPNYGSCNCTLENIMIIQDNQSKPQCHVDCSNLGLVELPQRLPD). LRR repeat units lie at residues 417 to 438 (NTFMLNITNNKITSLGDYFHTN), 443 to 464 (NINRLLADNNQISSIYEFEGTK), and 468 to 489 (TFQRIYMRNNSLSKIPEYFLNN). The region spanning 505-554 (NKLQCDCNSAKTLQNWLKERSSDIPDYMEIRCRNMPQRVIELQEAKLCQS) is the LRRCT domain.

Functionally, has a role in the ecdysone induced cascade; probably indirect control of 'late' ecdysone genes. This is Protein halfway from Drosophila melanogaster (Fruit fly).